We begin with the raw amino-acid sequence, 349 residues long: Core protein VP7 (349 aa).

The N-linked (GlcNAc...) asparagine; by host glycan is linked to Asn287.

Belongs to the orbivirus VP7 family. Homotrimer that assemble in a complex of 260 capsomers on an inner scaffold composed of VP3.

It localises to the virion. In terms of biological role, the VP7 protein is one of the five proteins (with VP1, VP3, VP4, and VP6) which form the inner capsid of the virus. The sequence is that of Core protein VP7 (Segment-7) from Antilocapra americana (Pronghorn).